Here is a 96-residue protein sequence, read N- to C-terminus: Exodeoxyribonuclease 7 small subunit (96 aa).

Over residues 61-79 (ALTKDESQKTNKTGFRTES) the composition is skewed to basic and acidic residues. Residues 61–96 (ALTKDESQKTNKTGFRTESKSTSQTSSDSVLEEDLF) form a disordered region. Residues 80 to 89 (KSTSQTSSDS) show a composition bias toward low complexity.

Belongs to the XseB family. In terms of assembly, heterooligomer composed of large and small subunits.

It is found in the cytoplasm. It carries out the reaction Exonucleolytic cleavage in either 5'- to 3'- or 3'- to 5'-direction to yield nucleoside 5'-phosphates.. Bidirectionally degrades single-stranded DNA into large acid-insoluble oligonucleotides, which are then degraded further into small acid-soluble oligonucleotides. The protein is Exodeoxyribonuclease 7 small subunit of Leptospira borgpetersenii serovar Hardjo-bovis (strain JB197).